A 465-amino-acid polypeptide reads, in one-letter code: Mothers against decapentaplegic homolog 5 (465 aa).

In terms of domain architecture, MH1 spans 13 to 137 (PAVKRLLGWK…YKRVESPVLP (125 aa)). Zn(2+) contacts are provided by Cys-65, Cys-110, Cys-122, and His-127. Residues 163–242 (NEPHMPHNAT…MGQDNSQSMD (80 aa)) form a disordered region. The span at 173–183 (FPDSFQQPNST) shows a compositional bias: polar residues. Over residues 198–214 (ASSTYPSSPASSGPSSP) the composition is skewed to low complexity. One can recognise an MH2 domain in the interval 271–465 (WCSIVYYELN…SPLNPISSVS (195 aa)).

The protein belongs to the dwarfin/SMAD family. In terms of assembly, may form trimers with the co-SMAD SMAD4.

Its subcellular location is the cytoplasm. It is found in the nucleus. In terms of biological role, transcriptional modulator activated by BMP (bone morphogenetic proteins) type 1 receptor kinase. SMAD5 is a receptor-regulated SMAD (R-SMAD). This Gallus gallus (Chicken) protein is Mothers against decapentaplegic homolog 5 (SMAD5).